The primary structure comprises 611 residues: Chaperone protein HscA (611 aa).

This sequence belongs to the heat shock protein 70 family.

Chaperone involved in the maturation of iron-sulfur cluster-containing proteins. Has a low intrinsic ATPase activity which is markedly stimulated by HscB. Involved in the maturation of IscU. This chain is Chaperone protein HscA, found in Buchnera aphidicola subsp. Acyrthosiphon pisum (strain 5A).